The following is a 1477-amino-acid chain: Neuralized-like protein 4 (1477 aa).

Disordered regions lie at residues 1–26 and 168–196; these read MAELHPRTGKLISLSNGNRTAARKQP and QPPPEEEEEEDAEEQEGSLVPLGQSRPDK. The NHR 1 domain maps to 1-167; sequence MAELHPRTGK…KCTQITVLSC (167 aa). The segment covering 171–183 has biased composition (acidic residues); sequence PEEEEEEDAEEQE. NHR domains lie at 250–417, 450–616, 645–813, and 841–1010; these read ALLF…IVHN, QLLF…IMDE, DLRF…LTGG, and SHRF…TVSS. The tract at residues 1012-1041 is disordered; sequence LLEEPDATKPPSITSESEEEEDPADHGDPH. Residues 1048 to 1211 enclose the NHR 6 domain; that stretch reads SLQFLANHGK…QCEQVSIVTG (164 aa).

Ubiquitinated. This ubiquitination leads to proteasomal degradation.

Its subcellular location is the cytoplasm. The protein resides in the cytoskeleton. It localises to the microtubule organizing center. The protein localises to the centrosome. It is found in the centriole. In terms of biological role, promotes CCP110 ubiquitination and proteasome-dependent degradation. By counteracting accumulation of CP110, maintains normal centriolar homeostasis and preventing formation of ectopic microtubular organizing centers. This is Neuralized-like protein 4 (neurl4) from Xenopus tropicalis (Western clawed frog).